A 245-amino-acid polypeptide reads, in one-letter code: Probable transcriptional regulatory protein Aflv_0709 (245 aa).

A compositionally biased stretch (basic residues) spans 1 to 14 (MAGHSKWKNIQRRK). The tract at residues 1–21 (MAGHSKWKNIQRRKNAQDAKR) is disordered.

It belongs to the TACO1 family.

It localises to the cytoplasm. This Anoxybacillus flavithermus (strain DSM 21510 / WK1) protein is Probable transcriptional regulatory protein Aflv_0709.